Consider the following 393-residue polypeptide: Formate-dependent phosphoribosylglycinamide formyltransferase (393 aa).

Residues 22-23 (EL) and Glu82 each bind N(1)-(5-phospho-beta-D-ribosyl)glycinamide. Residues Arg114, Lys155, 160–165 (SSGKGQ), 195–198 (EGFV), and Glu203 each bind ATP. Residues 119-308 (RLAAEELGLV…EFALHVRAIL (190 aa)) enclose the ATP-grasp domain. Glu267 and Glu279 together coordinate Mg(2+). N(1)-(5-phospho-beta-D-ribosyl)glycinamide-binding positions include Asp286, Lys356, and 363–364 (RR).

This sequence belongs to the PurK/PurT family. In terms of assembly, homodimer.

The enzyme catalyses N(1)-(5-phospho-beta-D-ribosyl)glycinamide + formate + ATP = N(2)-formyl-N(1)-(5-phospho-beta-D-ribosyl)glycinamide + ADP + phosphate + H(+). Its pathway is purine metabolism; IMP biosynthesis via de novo pathway; N(2)-formyl-N(1)-(5-phospho-D-ribosyl)glycinamide from N(1)-(5-phospho-D-ribosyl)glycinamide (formate route): step 1/1. Involved in the de novo purine biosynthesis. Catalyzes the transfer of formate to 5-phospho-ribosyl-glycinamide (GAR), producing 5-phospho-ribosyl-N-formylglycinamide (FGAR). Formate is provided by PurU via hydrolysis of 10-formyl-tetrahydrofolate. This chain is Formate-dependent phosphoribosylglycinamide formyltransferase, found in Solidesulfovibrio magneticus (strain ATCC 700980 / DSM 13731 / RS-1) (Desulfovibrio magneticus).